The following is an 85-amino-acid chain: Small ribosomal subunit protein bS18c (85 aa).

This sequence belongs to the bacterial ribosomal protein bS18 family. As to quaternary structure, part of the 30S ribosomal subunit.

Its subcellular location is the plastid. It localises to the chloroplast. The polypeptide is Small ribosomal subunit protein bS18c (Tupiella akineta (Green alga)).